A 116-amino-acid chain; its full sequence is POU domain, class 4, transcription factor 1 (116 aa).

One can recognise a POU-specific domain in the interval valine 1–glutamate 54. The tract at residues alanine 56–isoleucine 79 is disordered. Residues lysine 72–valine 116 constitute a DNA-binding region (homeobox).

This sequence belongs to the POU transcription factor family. Class-4 subfamily.

It is found in the nucleus. The protein resides in the cytoplasm. Functionally, multifunctional transcription factor with different regions mediating its different effects. Acts by binding (via its C-terminal domain) to sequences related to the consensus octamer motif 5'-ATGCAAAT-3' in the regulatory regions of its target genes. Regulates the expression of specific genes involved in differentiation and survival within a subset of neuronal lineages. It has been shown that activation of some of these genes requires its N-terminal domain, maybe through a neuronal-specific cofactor. This is POU domain, class 4, transcription factor 1 (POU4F1) from Gallus gallus (Chicken).